The sequence spans 193 residues: Ion-translocating oxidoreductase complex subunit A (193 aa).

The next 6 membrane-spanning stretches (helical) occupy residues 4–24 (LLLI…RFLG), 39–59 (LGMG…TWVL), 72–92 (LQTI…EMIV), 102–122 (SLGI…LAVL), 134–154 (LVFA…FAGL), and 171–191 (PIEL…AGLV).

It belongs to the NqrDE/RnfAE family. The complex is composed of six subunits: RnfA, RnfB, RnfC, RnfD, RnfE and RnfG.

It localises to the cell inner membrane. Its function is as follows. Part of a membrane-bound complex that couples electron transfer with translocation of ions across the membrane. The protein is Ion-translocating oxidoreductase complex subunit A of Syntrophotalea carbinolica (strain DSM 2380 / NBRC 103641 / GraBd1) (Pelobacter carbinolicus).